The primary structure comprises 498 residues: Hexokinase-1 (498 aa).

Positions 39–492 constitute a Hexokinase domain; the sequence is AAAQRVVAEL…SGLGAALVAA (454 aa). A hexokinase small subdomain region spans residues 95-233; that stretch reads TGGEEGSYYA…GLDMRVSALI (139 aa). The ADP site is built by Gly-109, Thr-110, and Asn-111. D-glucose contacts are provided by Thr-199, Lys-200, Asn-234, and Asp-235. The hexokinase large subdomain stretch occupies residues 234 to 481; the sequence is NDTVGTLAAG…ERVVVKLASD (248 aa). Thr-258 is a binding site for ADP. D-glucose is bound by residues Asn-261, Glu-290, and Glu-321. Gly-446 contacts ADP.

This sequence belongs to the hexokinase family. In terms of tissue distribution, highly expressed in senescent leaves.

The enzyme catalyses a D-hexose + ATP = a D-hexose 6-phosphate + ADP + H(+). It carries out the reaction D-fructose + ATP = D-fructose 6-phosphate + ADP + H(+). It catalyses the reaction D-glucose + ATP = D-glucose 6-phosphate + ADP + H(+). Its pathway is carbohydrate metabolism; hexose metabolism. It participates in carbohydrate degradation; glycolysis; D-glyceraldehyde 3-phosphate and glycerone phosphate from D-glucose: step 1/4. Fructose and glucose phosphorylating enzyme. Acts as a positive regulator of leaf senescence by mediating glucose accumulation and inducing an increase in reactive oxygen species (ROS). The protein is Hexokinase-1 (HXK1) of Oryza sativa subsp. japonica (Rice).